The following is an 858-amino-acid chain: Heat shock protein 105 kDa (858 aa).

Residue Ser-2 is modified to N-acetylserine. Lys-471 is subject to N6-acetyllysine. Disordered regions lie at residues 500–584 and 796–858; these read KVPT…PPEA and CEPV…MDLD. Residues 504 to 514 are compositionally biased toward acidic residues; that stretch reads EENEMSSEADM. Residues Ser-509 and Ser-510 each carry the phosphoserine modification. Residues 532 to 554 are compositionally biased toward polar residues; sequence QQDNSEAGTQPQVQTDAQQTSQS. Ser-557 is modified (phosphoserine). A Phosphothreonine modification is found at Thr-561. Basic and acidic residues-rich tracts occupy residues 563-584 and 805-814; these read EENK…PPEA and PKIESPKLER. The residue at position 809 (Ser-809) is a Phosphoserine. The residue at position 815 (Thr-815) is a Phosphothreonine. The segment covering 821-832 has biased composition (basic and acidic residues); it reads IDKKEEDLEDKN. The segment covering 849–858 has biased composition (polar residues); it reads EKNSVNMDLD.

Belongs to the heat shock protein 70 family. As to quaternary structure, interacts with HSPA8/HSC70. Interacts with HSPA1A (via NBD) and HSPA1B (via NBD). Post-translationally, phosphorylation on Ser-509 may be important for regulation of the HSPA8/HSC70 chaperone activity. Highly expressed in testis. Present at lower levels in most brain regions, except cerebellum. Overexpressed in cancer cells.

Its subcellular location is the cytoplasm. In terms of biological role, acts as a nucleotide-exchange factor (NEF) for chaperone proteins HSPA1A and HSPA1B, promoting the release of ADP from HSPA1A/B thereby triggering client/substrate protein release. Prevents the aggregation of denatured proteins in cells under severe stress, on which the ATP levels decrease markedly. Inhibits HSPA8/HSC70 ATPase and chaperone activities. This is Heat shock protein 105 kDa (HSPH1) from Homo sapiens (Human).